Consider the following 95-residue polypeptide: Heteroscorpine-1 (95 aa).

The signal sequence occupies residues 1–19 (MNSKLTALIFLGLVAIASC). Positions 55–95 (EFQCVANIDTMGNCETHCQKTSGEKGFCHGTKCKCGKPLSY) constitute a BetaSPN-type CS-alpha/beta domain. 3 cysteine pairs are disulfide-bonded: Cys58/Cys82, Cys68/Cys87, and Cys72/Cys89.

The protein belongs to the long chain scorpion toxin family. Class 3 subfamily. Contains 3 disulfide bonds. As to expression, expressed by the venom gland.

Its subcellular location is the secreted. In terms of biological role, has antibacterial activity against B.subtilis, K.pneumoniae and P.aeruginosa. The polypeptide is Heteroscorpine-1 (Heterometrus laoticus (Thai giant scorpion)).